The primary structure comprises 201 residues: Recombination protein RecR (201 aa).

The C4-type zinc finger occupies 57-74 (CSICGNITATDTDPCVIC). The region spanning 82-178 (STVFVVENSR…AVTRLAHGLA (97 aa)) is the Toprim domain.

The protein belongs to the RecR family.

In terms of biological role, may play a role in DNA repair. It seems to be involved in an RecBC-independent recombinational process of DNA repair. It may act with RecF and RecO. This is Recombination protein RecR from Leuconostoc mesenteroides subsp. mesenteroides (strain ATCC 8293 / DSM 20343 / BCRC 11652 / CCM 1803 / JCM 6124 / NCDO 523 / NBRC 100496 / NCIMB 8023 / NCTC 12954 / NRRL B-1118 / 37Y).